The chain runs to 449 residues: 4-aminobutyrate aminotransferase (449 aa).

Lys-294 bears the N6-(pyridoxal phosphate)lysine mark.

This sequence belongs to the class-III pyridoxal-phosphate-dependent aminotransferase family. The cofactor is pyridoxal 5'-phosphate.

It carries out the reaction 4-aminobutanoate + 2-oxoglutarate = succinate semialdehyde + L-glutamate. It catalyses the reaction (S)-3-amino-2-methylpropanoate + 2-oxoglutarate = 2-methyl-3-oxopropanoate + L-glutamate. It functions in the pathway amino-acid degradation; 4-aminobutanoate degradation. The polypeptide is 4-aminobutyrate aminotransferase (gabT) (Mycobacterium bovis (strain ATCC BAA-935 / AF2122/97)).